Reading from the N-terminus, the 169-residue chain is Small ribosomal subunit protein uS5 (169 aa).

The S5 DRBM domain occupies 15–79 (LKDQVVAINR…ESAKKNLVKV (65 aa)).

The protein belongs to the universal ribosomal protein uS5 family. Part of the 30S ribosomal subunit. Contacts proteins S4 and S8.

Its function is as follows. With S4 and S12 plays an important role in translational accuracy. Functionally, located at the back of the 30S subunit body where it stabilizes the conformation of the head with respect to the body. This chain is Small ribosomal subunit protein uS5, found in Koribacter versatilis (strain Ellin345).